The chain runs to 247 residues: Phosphoribosylaminoimidazole-succinocarboxamide synthase (247 aa).

Belongs to the SAICAR synthetase family.

The enzyme catalyses 5-amino-1-(5-phospho-D-ribosyl)imidazole-4-carboxylate + L-aspartate + ATP = (2S)-2-[5-amino-1-(5-phospho-beta-D-ribosyl)imidazole-4-carboxamido]succinate + ADP + phosphate + 2 H(+). It participates in purine metabolism; IMP biosynthesis via de novo pathway; 5-amino-1-(5-phospho-D-ribosyl)imidazole-4-carboxamide from 5-amino-1-(5-phospho-D-ribosyl)imidazole-4-carboxylate: step 1/2. This chain is Phosphoribosylaminoimidazole-succinocarboxamide synthase, found in Herpetosiphon aurantiacus (strain ATCC 23779 / DSM 785 / 114-95).